Reading from the N-terminus, the 467-residue chain is Chromosomal replication initiator protein DnaA (467 aa).

The tract at residues 1–74 (MSADVWSQGC…ESVLSDLAGK (74 aa)) is domain I, interacts with DnaA modulators. The segment at 74–130 (KPVRLDLQLAAREAPPRPSSDAPRSNGHPQAAGQWLGAPSSSNAGAYTQASAPTPTH) is domain II. Positions 85 to 127 (REAPPRPSSDAPRSNGHPQAAGQWLGAPSSSNAGAYTQASAPT) are disordered. Polar residues predominate over residues 112–127 (PSSSNAGAYTQASAPT). The tract at residues 131 to 347 (RLNTALTFDT…GALRKVLAYA (217 aa)) is domain III, AAA+ region. Positions 175, 177, 178, and 179 each coordinate ATP. Residues 348–467 (RFSQKDINIA…LHVLEQTLKG (120 aa)) are domain IV, binds dsDNA.

It belongs to the DnaA family. As to quaternary structure, oligomerizes as a right-handed, spiral filament on DNA at oriC.

It is found in the cytoplasm. In terms of biological role, plays an essential role in the initiation and regulation of chromosomal replication. ATP-DnaA binds to the origin of replication (oriC) to initiate formation of the DNA replication initiation complex once per cell cycle. Binds the DnaA box (a 9 base pair repeat at the origin) and separates the double-stranded (ds)DNA. Forms a right-handed helical filament on oriC DNA; dsDNA binds to the exterior of the filament while single-stranded (ss)DNA is stabiized in the filament's interior. The ATP-DnaA-oriC complex binds and stabilizes one strand of the AT-rich DNA unwinding element (DUE), permitting loading of DNA polymerase. After initiation quickly degrades to an ADP-DnaA complex that is not apt for DNA replication. Binds acidic phospholipids. The protein is Chromosomal replication initiator protein DnaA of Methylibium petroleiphilum (strain ATCC BAA-1232 / LMG 22953 / PM1).